Here is a 1016-residue protein sequence, read N- to C-terminus: UvrABC system protein A (1016 aa).

32-39 (GVSGSGKS) contacts ATP. The segment at 259–286 (CPEHGSVLEELEPRSFSFNSPYGACGDC) adopts a C4-type zinc-finger fold. 2 consecutive ABC transporter domains span residues 315–627 (WTKK…KNSL) and 647–975 (GNGK…EYLR). 679-686 (GPSGSGKS) contacts ATP. Residues 778 to 804 (CEHCKGDGVMKIEMNFLPDIYVPCEVC) form a C4-type zinc finger. Residues 984-1016 (EPRARGEKAEKPAKAKAPAKKRTKKQTELVEAD) are disordered. The segment covering 985–996 (PRARGEKAEKPA) has biased composition (basic and acidic residues).

It belongs to the ABC transporter superfamily. UvrA family. As to quaternary structure, forms a heterotetramer with UvrB during the search for lesions.

Its subcellular location is the cytoplasm. In terms of biological role, the UvrABC repair system catalyzes the recognition and processing of DNA lesions. UvrA is an ATPase and a DNA-binding protein. A damage recognition complex composed of 2 UvrA and 2 UvrB subunits scans DNA for abnormalities. When the presence of a lesion has been verified by UvrB, the UvrA molecules dissociate. This chain is UvrABC system protein A, found in Deinococcus radiodurans (strain ATCC 13939 / DSM 20539 / JCM 16871 / CCUG 27074 / LMG 4051 / NBRC 15346 / NCIMB 9279 / VKM B-1422 / R1).